The chain runs to 235 residues: MVRGRQFLAARVYDTARAGMSSTIIQNTRPNVPMWLKALDHIPPAEVLTRPYPIQHTEPKDRGRAAQRPRNLFRPTKIVHPEDQLRQEFYRDHPWELARPKLVLELDGQDARRRDWSKGLRQPGMAVVQRQLWYMEVRGLSKARAYDVARKEFYKLRQQEEIERRVAVEEARMYGAYFGKNNLQVGMELEDAAYEQWKKWATIEISKLEAERTAAYANVVDTVTEPAEDDEEELL.

The interval 51–71 (PYPIQHTEPKDRGRAAQRPRN) is disordered.

Belongs to the mitochondrion-specific ribosomal protein mS23 family. Component of the mitochondrial small ribosomal subunit.

It is found in the mitochondrion. The chain is Small ribosomal subunit protein mS23 (RSM25) from Chaetomium globosum (strain ATCC 6205 / CBS 148.51 / DSM 1962 / NBRC 6347 / NRRL 1970) (Soil fungus).